The primary structure comprises 213 residues: Thiamine-phosphate synthase (213 aa).

Residues 38-42 (QLREK) and Asp-70 each bind 4-amino-2-methyl-5-(diphosphooxymethyl)pyrimidine. Residues Asp-71 and Glu-90 each contribute to the Mg(2+) site. Residue Ser-109 coordinates 4-amino-2-methyl-5-(diphosphooxymethyl)pyrimidine. Residue 135–137 (TQT) participates in 2-[(2R,5Z)-2-carboxy-4-methylthiazol-5(2H)-ylidene]ethyl phosphate binding. Lys-138 is a 4-amino-2-methyl-5-(diphosphooxymethyl)pyrimidine binding site. 2-[(2R,5Z)-2-carboxy-4-methylthiazol-5(2H)-ylidene]ethyl phosphate is bound by residues Gly-165 and 185–186 (VS).

This sequence belongs to the thiamine-phosphate synthase family. Mg(2+) is required as a cofactor.

It carries out the reaction 2-[(2R,5Z)-2-carboxy-4-methylthiazol-5(2H)-ylidene]ethyl phosphate + 4-amino-2-methyl-5-(diphosphooxymethyl)pyrimidine + 2 H(+) = thiamine phosphate + CO2 + diphosphate. It catalyses the reaction 2-(2-carboxy-4-methylthiazol-5-yl)ethyl phosphate + 4-amino-2-methyl-5-(diphosphooxymethyl)pyrimidine + 2 H(+) = thiamine phosphate + CO2 + diphosphate. The catalysed reaction is 4-methyl-5-(2-phosphooxyethyl)-thiazole + 4-amino-2-methyl-5-(diphosphooxymethyl)pyrimidine + H(+) = thiamine phosphate + diphosphate. The protein operates within cofactor biosynthesis; thiamine diphosphate biosynthesis; thiamine phosphate from 4-amino-2-methyl-5-diphosphomethylpyrimidine and 4-methyl-5-(2-phosphoethyl)-thiazole: step 1/1. Its function is as follows. Condenses 4-methyl-5-(beta-hydroxyethyl)thiazole monophosphate (THZ-P) and 2-methyl-4-amino-5-hydroxymethyl pyrimidine pyrophosphate (HMP-PP) to form thiamine monophosphate (TMP). In Lacticaseibacillus paracasei (strain ATCC 334 / BCRC 17002 / CCUG 31169 / CIP 107868 / KCTC 3260 / NRRL B-441) (Lactobacillus paracasei), this protein is Thiamine-phosphate synthase.